Reading from the N-terminus, the 590-residue chain is (+)-sabinene synthase, chloroplastic (590 aa).

The N-terminal 51 residues, 1–51 (MSSISINIAMPLNSLHNFERKPSKAWSTSCTAPAARLRASSSLQQEKPHQI), are a transit peptide targeting the chloroplast. Mg(2+) contacts are provided by D343, D347, D487, T491, and E495. Positions 343–347 (DDVYD) match the DDXXD motif motif.

It belongs to the terpene synthase family. Monomer. It depends on Mg(2+) as a cofactor.

It is found in the plastid. The protein localises to the chloroplast. The catalysed reaction is (2E)-geranyl diphosphate = (1R,5R)-sabinene + diphosphate. It participates in terpene metabolism; sabinene hydrate biosynthesis. Catalyzes the formation of the (-)-3-isothujone precursor sabinene from geranyl diphosphate. The enzyme also produces significant amounts of gamma-terpinene, terpinolene and limonene. This is (+)-sabinene synthase, chloroplastic from Salvia officinalis (Sage).